The following is a 303-amino-acid chain: Ferrochelatase (303 aa).

Residues His-185 and Glu-262 each coordinate Fe cation.

The protein belongs to the ferrochelatase family.

The protein resides in the cytoplasm. It catalyses the reaction heme b + 2 H(+) = protoporphyrin IX + Fe(2+). Its pathway is porphyrin-containing compound metabolism; protoheme biosynthesis; protoheme from protoporphyrin-IX: step 1/1. Catalyzes the ferrous insertion into protoporphyrin IX. The sequence is that of Ferrochelatase from Campylobacter jejuni (strain RM1221).